Consider the following 254-residue polypeptide: Ditrans,polycis-undecaprenyl-diphosphate synthase ((2E,6E)-farnesyl-diphosphate specific) (254 aa).

The active site involves Asp25. Asp25 provides a ligand contact to Mg(2+). Substrate-binding positions include 26-29 (GNGR), Trp30, Arg38, His42, and 70-72 (SSE). Asn73 (proton acceptor) is an active-site residue. Positions 74, 76, and 193 each coordinate substrate. A Mg(2+)-binding site is contributed by His198. 199–201 (RIS) provides a ligand contact to substrate. A Mg(2+)-binding site is contributed by Glu212.

The protein belongs to the UPP synthase family. Homodimer. The cofactor is Mg(2+).

It catalyses the reaction 8 isopentenyl diphosphate + (2E,6E)-farnesyl diphosphate = di-trans,octa-cis-undecaprenyl diphosphate + 8 diphosphate. Functionally, catalyzes the sequential condensation of isopentenyl diphosphate (IPP) with (2E,6E)-farnesyl diphosphate (E,E-FPP) to yield (2Z,6Z,10Z,14Z,18Z,22Z,26Z,30Z,34E,38E)-undecaprenyl diphosphate (di-trans,octa-cis-UPP). UPP is the precursor of glycosyl carrier lipid in the biosynthesis of bacterial cell wall polysaccharide components such as peptidoglycan and lipopolysaccharide. The protein is Ditrans,polycis-undecaprenyl-diphosphate synthase ((2E,6E)-farnesyl-diphosphate specific) of Photorhabdus laumondii subsp. laumondii (strain DSM 15139 / CIP 105565 / TT01) (Photorhabdus luminescens subsp. laumondii).